The sequence spans 446 residues: Exodeoxyribonuclease 7 large subunit (446 aa).

It belongs to the XseA family. As to quaternary structure, heterooligomer composed of large and small subunits.

The protein localises to the cytoplasm. The enzyme catalyses Exonucleolytic cleavage in either 5'- to 3'- or 3'- to 5'-direction to yield nucleoside 5'-phosphates.. In terms of biological role, bidirectionally degrades single-stranded DNA into large acid-insoluble oligonucleotides, which are then degraded further into small acid-soluble oligonucleotides. In Streptococcus pneumoniae serotype 4 (strain ATCC BAA-334 / TIGR4), this protein is Exodeoxyribonuclease 7 large subunit.